Here is a 405-residue protein sequence, read N- to C-terminus: Magnesium-protoporphyrin IX monomethyl ester [oxidative] cyclase, chloroplastic (405 aa).

The N-terminal 43 residues, 1-43, are a transit peptide targeting the chloroplast; it reads MATEMALVKPISKFSTSSPIFSNSRYGKFTTVRMSSTSQSTTK.

The protein belongs to the AcsF family. The cofactor is Fe cation.

The protein localises to the plastid. It localises to the chloroplast. The catalysed reaction is Mg-protoporphyrin IX 13-monomethyl ester + 3 NADPH + 3 O2 + 2 H(+) = 3,8-divinyl protochlorophyllide a + 3 NADP(+) + 5 H2O. Its pathway is porphyrin-containing compound metabolism; chlorophyll biosynthesis. Catalyzes the formation of the isocyclic ring in chlorophyll biosynthesis. Mediates the cyclase reaction, which results in the formation of divinylprotochlorophyllide (Pchlide) characteristic of all chlorophylls from magnesium-protoporphyrin IX 13-monomethyl ester (MgPMME). The polypeptide is Magnesium-protoporphyrin IX monomethyl ester [oxidative] cyclase, chloroplastic (CRD1) (Gossypium hirsutum (Upland cotton)).